The following is a 149-amino-acid chain: UPF0336 protein Lxx02810 (149 aa).

This sequence belongs to the UPF0336 family.

The sequence is that of UPF0336 protein Lxx02810 from Leifsonia xyli subsp. xyli (strain CTCB07).